Here is a 1155-residue protein sequence, read N- to C-terminus: RHO1 GDP-GTP exchange protein 1 (1155 aa).

At M1 the chain carries N-acetylmethionine. A compositionally biased stretch (polar residues) spans 100-143; it reads NSSPQSFTGDQISPTNKKISINDSTRQDKGNSCTTTSSPSQKRS. Residues 100-249 form a disordered region; the sequence is NSSPQSFTGD…HSRSKSSPVS (150 aa). Phosphoserine is present on residues S154 and S155. Residues 155-167 are compositionally biased toward low complexity; sequence SPSLLSFSKNSGS. Phosphothreonine is present on T180. Positions 190 to 227 are enriched in low complexity; that stretch reads LHSSFNGKHSSSSTSSLFALESLKTQNRRSSNSSNHSS. Residues 228–243 show a composition bias toward basic residues; that stretch reads QYRRHTNQHQRHHSRS. A Phosphoserine modification is found at S433. The 188-residue stretch at 464 to 651 folds into the DH domain; that stretch reads KRQEAIYELF…KDLMKRIDRA (188 aa). The CNH domain maps to 842–1137; it reads TNRVNDVLIC…RMLKSYAKKI (296 aa).

Its function is as follows. Stimulates the exchange of RHO1 GDP-bound form into GTP-bound form. The chain is RHO1 GDP-GTP exchange protein 1 (ROM1) from Saccharomyces cerevisiae (strain ATCC 204508 / S288c) (Baker's yeast).